A 118-amino-acid polypeptide reads, in one-letter code: MICOS complex subunit MIC13 (118 aa).

Residues 1–7 lie on the Mitochondrial matrix side of the membrane; that stretch reads MVARVWS. Residues 8–26 traverse the membrane as a helical segment; it reads LMRFLIKGSVAGGAVYLVY. At 27 to 118 the chain is on the mitochondrial intermembrane side; the sequence is DQELLGPSDK…GWEYVKARTK (92 aa).

This sequence belongs to the MICOS complex subunit Mic13 family. As to quaternary structure, component of the mitochondrial contact site and cristae organizing system (MICOS) complex, composed of at least MICOS10/MIC10, CHCHD3/MIC19, CHCHD6/MIC25, APOO/MIC26, MICOS13/MIC13, APOOL/MIC27 and IMMT/MIC60. The MICOS complex associates with mitochondrial outer membrane proteins SAMM50, MTX1 and MTX2 (together described as components of the mitochondrial outer membrane sorting assembly machinery (SAM) complex) and DNAJC11, mitochondrial inner membrane protein TMEM11 and with HSPA9. The MICOS and SAM complexes together with DNAJC11 are part of a large protein complex spanning both membranes termed the mitochondrial intermembrane space bridging (MIB) complex.

The protein localises to the mitochondrion inner membrane. Functionally, component of the MICOS complex, a large protein complex of the mitochondrial inner membrane that plays crucial roles in the maintenance of crista junctions, inner membrane architecture, and formation of contact sites to the outer membrane. Constituent of mature MICOS complex, it is required for the formation of cristae junction (CJ) and maintenance of cristae morphology. Required for the incorporation of MICOS10/MIC10 into the MICOS complex. The chain is MICOS complex subunit MIC13 from Homo sapiens (Human).